Reading from the N-terminus, the 387-residue chain is Acetylornithine aminotransferase (387 aa).

Residues 97–98 (GT) and phenylalanine 130 contribute to the pyridoxal 5'-phosphate site. Arginine 133 provides a ligand contact to N(2)-acetyl-L-ornithine. 215–218 (DEVQ) is a binding site for pyridoxal 5'-phosphate. Lysine 244 bears the N6-(pyridoxal phosphate)lysine mark. Threonine 273 contributes to the pyridoxal 5'-phosphate binding site.

This sequence belongs to the class-III pyridoxal-phosphate-dependent aminotransferase family. ArgD subfamily. In terms of assembly, homodimer. Pyridoxal 5'-phosphate is required as a cofactor.

It is found in the cytoplasm. It carries out the reaction N(2)-acetyl-L-ornithine + 2-oxoglutarate = N-acetyl-L-glutamate 5-semialdehyde + L-glutamate. Its pathway is amino-acid biosynthesis; L-arginine biosynthesis; N(2)-acetyl-L-ornithine from L-glutamate: step 4/4. This Clostridium acetobutylicum (strain ATCC 824 / DSM 792 / JCM 1419 / IAM 19013 / LMG 5710 / NBRC 13948 / NRRL B-527 / VKM B-1787 / 2291 / W) protein is Acetylornithine aminotransferase.